The primary structure comprises 302 residues: Glutaminase (302 aa).

The substrate site is built by serine 61, asparagine 111, glutamate 155, asparagine 162, tyrosine 186, tyrosine 238, and valine 256.

Belongs to the glutaminase family. As to quaternary structure, homotetramer.

It carries out the reaction L-glutamine + H2O = L-glutamate + NH4(+). This chain is Glutaminase, found in Ectopseudomonas mendocina (strain ymp) (Pseudomonas mendocina).